The primary structure comprises 63 residues: uncharacterized protein (63 aa).

Residues 4–24 (LNQFILIFLLLIVILFIFFLI) traverse the membrane as a helical segment.

It is found in the membrane. This is an uncharacterized protein from Invertebrate iridescent virus 6 (IIV-6).